The sequence spans 251 residues: Cell division protein ZapD (251 aa).

This sequence belongs to the ZapD family. As to quaternary structure, interacts with FtsZ.

Its subcellular location is the cytoplasm. Cell division factor that enhances FtsZ-ring assembly. Directly interacts with FtsZ and promotes bundling of FtsZ protofilaments, with a reduction in FtsZ GTPase activity. This is Cell division protein ZapD from Paraburkholderia phytofirmans (strain DSM 17436 / LMG 22146 / PsJN) (Burkholderia phytofirmans).